Consider the following 103-residue polypeptide: Large ribosomal subunit protein bL21 (103 aa).

The protein belongs to the bacterial ribosomal protein bL21 family. As to quaternary structure, part of the 50S ribosomal subunit. Contacts protein L20.

In terms of biological role, this protein binds to 23S rRNA in the presence of protein L20. The protein is Large ribosomal subunit protein bL21 of Colwellia psychrerythraea (strain 34H / ATCC BAA-681) (Vibrio psychroerythus).